A 554-amino-acid chain; its full sequence is MFCIQCEQTIRTPAGNGCSYSQGMCGKLAATSDLQDLLIYMLQGVSVYAVKARELGIIDAEIDSFVPKAFFATLTNVNFDDERIMAYTQQAAHYRAQLKASYEAACEQAGIAVEQVPQVAQLVLGTSKIEMLAQAPIALLNKDKHDVHEDIMGLRLLCLYGLKGAAAYMEHARVLGQTDADVAGRFHEIMSFLGEPSVDGDKLFTTAMDIGQLNYRIMAMLDAGETQAFGHPEPTVVNTKPFKGKAILVSGHDMKDLELILEQTVGKGINVFTHGEMLPALAYPAFKKYPHLVGNYGSAWQNQQQEFANFPGAVVMTSNCIIDPNVGSYSDRIFTRSIVGWPGVVHIEGDDFSAVIDKALALEGFIYDEIPHTITIGFAHNALMAAAPAVVENVKSGAIKHFFLVGGCDGDKADRSYFTELAKSTPKDSIILTLGCGKYKFNKLEFGDINGIPRLLDVGQCNDAYSAIQLAIALAEVFECDINELPLSLVLSWFEQKAIVVLLTLLSLGVKNIRTGPTPPAFLTANLAKILEEKFGLRNTTTVEADLKTMLNVA.

Cys-3, Cys-6, Cys-18, and Cys-25 together coordinate [2Fe-2S] cluster. Residues His-252, Glu-276, Cys-320, Cys-408, Cys-436, Cys-461, Glu-495, and Lys-497 each contribute to the hybrid [4Fe-2O-2S] cluster site. Cys-408 carries the cysteine persulfide modification.

It belongs to the HCP family. [2Fe-2S] cluster serves as cofactor. Hybrid [4Fe-2O-2S] cluster is required as a cofactor.

Its subcellular location is the cytoplasm. The catalysed reaction is A + NH4(+) + H2O = hydroxylamine + AH2 + H(+). In terms of biological role, catalyzes the reduction of hydroxylamine to form NH(3) and H(2)O. This Shewanella baltica (strain OS195) protein is Hydroxylamine reductase.